The sequence spans 506 residues: Anaerobic nitric oxide reductase transcription regulator NorR (506 aa).

Aspartate 57 carries the post-translational modification 4-aspartylphosphate. Residues 187 to 416 (MIGLSPAMTQ…LEHAIHRAVV (230 aa)) form the Sigma-54 factor interaction domain. Residues 215–222 (GETGTGKE) and 278–287 (ADNGTLFLDE) contribute to the ATP site. The H-T-H motif DNA-binding region spans 481–500 (WAASARALETDVANLHRLAK).

It functions in the pathway nitrogen metabolism; nitric oxide reduction. Required for the expression of anaerobic nitric oxide (NO) reductase, acts as a transcriptional activator for at least the norVW operon. Activation also requires sigma-54. The polypeptide is Anaerobic nitric oxide reductase transcription regulator NorR (Salmonella schwarzengrund (strain CVM19633)).